The following is a 372-amino-acid chain: Transaldolase (372 aa).

Catalysis depends on K140, which acts as the Schiff-base intermediate with substrate.

This sequence belongs to the transaldolase family. Type 2 subfamily.

It localises to the cytoplasm. It carries out the reaction D-sedoheptulose 7-phosphate + D-glyceraldehyde 3-phosphate = D-erythrose 4-phosphate + beta-D-fructose 6-phosphate. It participates in carbohydrate degradation; pentose phosphate pathway; D-glyceraldehyde 3-phosphate and beta-D-fructose 6-phosphate from D-ribose 5-phosphate and D-xylulose 5-phosphate (non-oxidative stage): step 2/3. In terms of biological role, transaldolase is important for the balance of metabolites in the pentose-phosphate pathway. This is Transaldolase from Acidothermus cellulolyticus (strain ATCC 43068 / DSM 8971 / 11B).